A 271-amino-acid chain; its full sequence is Phosphonates import ATP-binding protein PhnC 2 (271 aa).

Residues 2 to 245 (LVVEGLTCRF…IARELYDLEA (244 aa)) enclose the ABC transporter domain. 34–41 (GRSGAGKS) contributes to the ATP binding site.

This sequence belongs to the ABC transporter superfamily. Phosphonates importer (TC 3.A.1.9.1) family. In terms of assembly, the complex is composed of two ATP-binding proteins (PhnC), two transmembrane proteins (PhnE) and a solute-binding protein (PhnD).

The protein resides in the cell inner membrane. It catalyses the reaction phosphonate(out) + ATP + H2O = phosphonate(in) + ADP + phosphate + H(+). Functionally, part of the ABC transporter complex PhnCDE involved in phosphonates import. Responsible for energy coupling to the transport system. In Rhodopseudomonas palustris (strain BisB18), this protein is Phosphonates import ATP-binding protein PhnC 2.